A 183-amino-acid polypeptide reads, in one-letter code: Crossover junction endodeoxyribonuclease RuvC (183 aa).

Residues Asp16, Glu75, and Asp147 contribute to the active site. 3 residues coordinate Mg(2+): Asp16, Glu75, and Asp147.

Belongs to the RuvC family. Homodimer which binds Holliday junction (HJ) DNA. The HJ becomes 2-fold symmetrical on binding to RuvC with unstacked arms; it has a different conformation from HJ DNA in complex with RuvA. In the full resolvosome a probable DNA-RuvA(4)-RuvB(12)-RuvC(2) complex forms which resolves the HJ. Mg(2+) is required as a cofactor.

It is found in the cytoplasm. The enzyme catalyses Endonucleolytic cleavage at a junction such as a reciprocal single-stranded crossover between two homologous DNA duplexes (Holliday junction).. In terms of biological role, the RuvA-RuvB-RuvC complex processes Holliday junction (HJ) DNA during genetic recombination and DNA repair. Endonuclease that resolves HJ intermediates. Cleaves cruciform DNA by making single-stranded nicks across the HJ at symmetrical positions within the homologous arms, yielding a 5'-phosphate and a 3'-hydroxyl group; requires a central core of homology in the junction. The consensus cleavage sequence is 5'-(A/T)TT(C/G)-3'. Cleavage occurs on the 3'-side of the TT dinucleotide at the point of strand exchange. HJ branch migration catalyzed by RuvA-RuvB allows RuvC to scan DNA until it finds its consensus sequence, where it cleaves and resolves the cruciform DNA. This is Crossover junction endodeoxyribonuclease RuvC from Azoarcus sp. (strain BH72).